Reading from the N-terminus, the 200-residue chain is LPICANGSTNCHQIPLDDLFERVVKLAHRIHSLTSDMFNEFDERYAQGRGFISRAINNCHTSSLTTPEDKEQAQKFHHDDLLRLVMKVLRSWNDPLLQLVSEVPQGIGEAPGTILWKVTEVEDQTKQLIEGMEKILGRMHPNGLDNEVLSLWPMPMAMHAGDGSKLFAFYNLLHCFRRDSFKIDSYLKLLRCRLFHEGGC.

3 disulfides stabilise this stretch: Cys-4/Cys-11, Cys-59/Cys-175, and Cys-192/Cys-200.

This sequence belongs to the somatotropin/prolactin family. In terms of tissue distribution, pituitary gland.

Its subcellular location is the secreted. In Protopterus aethiopicus (Marbled lungfish), this protein is Prolactin (prl).